The sequence spans 65 residues: Large ribosomal subunit protein bL32 (65 aa).

Positions 1 to 45 (MAVQQNKKTPSKRGMRRAHDVLKKPTFSVDFSSGETHRRHHVTPD) are disordered.

The protein belongs to the bacterial ribosomal protein bL32 family.

The sequence is that of Large ribosomal subunit protein bL32 from Nitrosococcus oceani (strain ATCC 19707 / BCRC 17464 / JCM 30415 / NCIMB 11848 / C-107).